Reading from the N-terminus, the 121-residue chain is Flagellar protein FliT (121 aa).

Residues 1–50 (MNNAPHLYFAWQQLVEKSQLMLRLATEEQWDELIASEMAYVNAVQEIAHL) form a required for homodimerization region. The interval 60-98 (MQEQLRPMLLLILDNESKVKQLLQIRMDELAKLVGQSSV) is fliD binding.

It belongs to the FliT family. Homodimer. Interacts with FliD and FlhC.

The protein resides in the cytoplasm. The protein localises to the cytosol. Its function is as follows. Dual-function protein that regulates the transcription of class 2 flagellar operons and that also acts as an export chaperone for the filament-capping protein FliD. As a transcriptional regulator, acts as an anti-FlhDC factor; it directly binds FlhC, thus inhibiting the binding of the FlhC/FlhD complex to class 2 promoters, resulting in decreased expression of class 2 flagellar operons. As a chaperone, effects FliD transition to the membrane by preventing its premature polymerization, and by directing it to the export apparatus. The sequence is that of Flagellar protein FliT from Escherichia coli O6:K15:H31 (strain 536 / UPEC).